Reading from the N-terminus, the 615-residue chain is Medium-chain acyl-CoA ligase ACSF2, mitochondrial (615 aa).

Residues Met1 to Phe41 constitute a mitochondrion transit peptide. The residue at position 179 (Lys179) is an N6-acetyllysine. An N6-acetyllysine; alternate modification is found at Lys182. Lys182 carries the N6-succinyllysine; alternate modification. An ATP-binding site is contributed by Thr263–Lys271. N6-acetyllysine occurs at positions 340 and 398. Lys478 bears the N6-succinyllysine mark. Residues Asp493 and Arg508 each contribute to the ATP site. An N6-acetyllysine modification is found at Lys510. N6-acetyllysine; alternate occurs at positions 544 and 570. N6-succinyllysine; alternate is present on residues Lys544 and Lys570. An ATP-binding site is contributed by Lys599. At Lys599 the chain carries N6-succinyllysine.

The protein belongs to the ATP-dependent AMP-binding enzyme family.

Its subcellular location is the mitochondrion. It catalyses the reaction a medium-chain fatty acid + ATP + CoA = a medium-chain fatty acyl-CoA + AMP + diphosphate. The catalysed reaction is octanoate + ATP + CoA = octanoyl-CoA + AMP + diphosphate. Acyl-CoA synthases catalyze the initial reaction in fatty acid metabolism, by forming a thioester with CoA. Has some preference toward medium-chain substrates. Plays a role in adipocyte differentiation. This chain is Medium-chain acyl-CoA ligase ACSF2, mitochondrial, found in Pongo abelii (Sumatran orangutan).